The primary structure comprises 82 residues: Small ribosomal subunit protein bS16 (82 aa).

This sequence belongs to the bacterial ribosomal protein bS16 family.

The sequence is that of Small ribosomal subunit protein bS16 from Bdellovibrio bacteriovorus (strain ATCC 15356 / DSM 50701 / NCIMB 9529 / HD100).